An 864-amino-acid chain; its full sequence is Leucine--tRNA ligase (864 aa).

The short motif at 42 to 52 is the 'HIGH' region element; it reads PYPSGKLHMGH. The 'KMSKS' region motif lies at 624–628; the sequence is KMSKS. Residue lysine 627 participates in ATP binding.

The protein belongs to the class-I aminoacyl-tRNA synthetase family.

The protein resides in the cytoplasm. The catalysed reaction is tRNA(Leu) + L-leucine + ATP = L-leucyl-tRNA(Leu) + AMP + diphosphate. The protein is Leucine--tRNA ligase of Burkholderia pseudomallei (strain 668).